We begin with the raw amino-acid sequence, 317 residues long: Beta-ketoacyl-[acyl-carrier-protein] synthase III (317 aa).

Active-site residues include C112 and H244. The tract at residues 245 to 249 is ACP-binding; sequence QANLR. N274 is an active-site residue.

Belongs to the thiolase-like superfamily. FabH family. Homodimer.

Its subcellular location is the cytoplasm. It carries out the reaction malonyl-[ACP] + acetyl-CoA + H(+) = 3-oxobutanoyl-[ACP] + CO2 + CoA. It participates in lipid metabolism; fatty acid biosynthesis. Its function is as follows. Catalyzes the condensation reaction of fatty acid synthesis by the addition to an acyl acceptor of two carbons from malonyl-ACP. Catalyzes the first condensation reaction which initiates fatty acid synthesis and may therefore play a role in governing the total rate of fatty acid production. Possesses both acetoacetyl-ACP synthase and acetyl transacylase activities. Its substrate specificity determines the biosynthesis of branched-chain and/or straight-chain of fatty acids. This Escherichia coli O9:H4 (strain HS) protein is Beta-ketoacyl-[acyl-carrier-protein] synthase III.